The chain runs to 439 residues: Proton pump-interactor 4 (439 aa).

A coiled-coil region spans residues 286 to 354; sequence KEEKEIDEET…AKKKKAVCKS (69 aa). A helical transmembrane segment spans residues 415 to 435; sequence LWVWTVSSAAVALPLALLVVF.

It belongs to the plant Proton pump-interactor protein family.

The protein resides in the cell membrane. It localises to the endoplasmic reticulum membrane. May regulate plasma membrane ATPase activity. The protein is Proton pump-interactor 4 (PPI4) of Arabidopsis thaliana (Mouse-ear cress).